A 362-amino-acid polypeptide reads, in one-letter code: Malate dehydrogenase (362 aa).

This sequence belongs to the LDH2/MDH2 oxidoreductase family. As to quaternary structure, homodimer.

The protein resides in the cytoplasm. The enzyme catalyses (S)-malate + NAD(+) = oxaloacetate + NADH + H(+). The chain is Malate dehydrogenase (mdh) from Pyrococcus abyssi (strain GE5 / Orsay).